A 115-amino-acid chain; its full sequence is NADH-ubiquinone oxidoreductase chain 3 (115 aa).

A run of 3 helical transmembrane segments spans residues 4–24 (LVTMLINTTLSFVLILIAFWL), 55–75 (FFLVAITFLLFDLEIALLLPM), and 86–106 (TMTLTAFILLSVLALGLAYEW).

Belongs to the complex I subunit 3 family. Core subunit of respiratory chain NADH dehydrogenase (Complex I) which is composed of 45 different subunits. Interacts with TMEM186. Interacts with TMEM242.

It is found in the mitochondrion inner membrane. It catalyses the reaction a ubiquinone + NADH + 5 H(+)(in) = a ubiquinol + NAD(+) + 4 H(+)(out). Its function is as follows. Core subunit of the mitochondrial membrane respiratory chain NADH dehydrogenase (Complex I) which catalyzes electron transfer from NADH through the respiratory chain, using ubiquinone as an electron acceptor. Essential for the catalytic activity of complex I. This is NADH-ubiquinone oxidoreductase chain 3 from Nelsonia neotomodon (Diminutive woodrat).